We begin with the raw amino-acid sequence, 424 residues long: Hemagglutinin-esterase (424 aa).

Signal peptides lie at residues 1 to 16 (MFLLLRFVLVSCIIGS) and 1 to 18 (MFLLLRFVLVSCIIGSLG). Positions 7-127 (FVLVSCIIGS…SNDIWMQNKG (121 aa)) are esterase domain 1. The Virion surface portion of the chain corresponds to 17 to 392 (LGFDNPPTNV…PICVYDPLPL (376 aa)). Ser-40 serves as the catalytic Nucleophile. Cys-44 and Cys-65 are disulfide-bonded. N-linked (GlcNAc...) asparagine; by host glycosylation is found at Asn-54, Asn-89, Asn-153, Asn-236, and Asn-301. Disulfide bonds link Cys-113/Cys-162, Cys-197/Cys-276, and Cys-205/Cys-249. The tract at residues 128 to 266 (LFYTQVYKNM…GNYLAISNEL (139 aa)) is receptor binding. The esterase domain 2 stretch occupies residues 267 to 379 (LLTVPTKAIC…RCPTAADINT (113 aa)). Cys-307 and Cys-312 are oxidised to a cystine. An N-linked (GlcNAc...) asparagine; by host glycan is attached at Asn-316. Catalysis depends on charge relay system residues Asp-326 and His-329. Residues Cys-347 and Cys-371 are joined by a disulfide bond. An N-linked (GlcNAc...) asparagine; by host glycan is attached at Asn-358. Residues 393-413 (ILLGILLGVAVIIIVVLLLYF) traverse the membrane as a helical segment. Over 414-424 (MVDNGTRLHDA) the chain is Intravirion. N-linked (GlcNAc...) asparagine; by host glycosylation occurs at Asn-417.

This sequence belongs to the influenza type C/coronaviruses hemagglutinin-esterase family. In terms of assembly, homodimer; disulfide-linked. Forms a complex with the M protein in the pre-Golgi. Associates then with S-M complex to form a ternary complex S-M-HE. In terms of processing, N-glycosylated in the host RER.

Its subcellular location is the virion membrane. It localises to the host cell membrane. The enzyme catalyses N-acetyl-9-O-acetylneuraminate + H2O = N-acetylneuraminate + acetate + H(+). It catalyses the reaction N-acetyl-4-O-acetylneuraminate + H2O = N-acetylneuraminate + acetate + H(+). In terms of biological role, structural protein that makes short spikes at the surface of the virus. Contains receptor binding and receptor-destroying activities. Mediates de-O-acetylation of N-acetyl-4-O-acetylneuraminic acid, which is probably the receptor determinant recognized by the virus on the surface of erythrocytes and susceptible cells. This receptor-destroying activity is important for virus release as it probably helps preventing self-aggregation and ensures the efficient spread of the progeny virus from cell to cell. May serve as a secondary viral attachment protein for initiating infection, the spike protein being the major one. May become a target for both the humoral and the cellular branches of the immune system. This is Hemagglutinin-esterase from Bos taurus (Bovine).